Reading from the N-terminus, the 350-residue chain is 4-hydroxythreonine-4-phosphate dehydrogenase (350 aa).

Residues H138 and T139 each coordinate substrate. Positions 173, 218, and 273 each coordinate a divalent metal cation. The substrate site is built by K281, N290, and R299.

Belongs to the PdxA family. In terms of assembly, homodimer. Requires Zn(2+) as cofactor. The cofactor is Mg(2+). Co(2+) serves as cofactor.

The protein resides in the cytoplasm. The catalysed reaction is 4-(phosphooxy)-L-threonine + NAD(+) = 3-amino-2-oxopropyl phosphate + CO2 + NADH. It participates in cofactor biosynthesis; pyridoxine 5'-phosphate biosynthesis; pyridoxine 5'-phosphate from D-erythrose 4-phosphate: step 4/5. Its function is as follows. Catalyzes the NAD(P)-dependent oxidation of 4-(phosphooxy)-L-threonine (HTP) into 2-amino-3-oxo-4-(phosphooxy)butyric acid which spontaneously decarboxylates to form 3-amino-2-oxopropyl phosphate (AHAP). The protein is 4-hydroxythreonine-4-phosphate dehydrogenase of Xanthobacter autotrophicus (strain ATCC BAA-1158 / Py2).